A 329-amino-acid polypeptide reads, in one-letter code: Ketol-acid reductoisomerase (NADP(+)) (329 aa).

Residues 2–181 (MKKYYESDAD…GATRAVVLET (180 aa)) enclose the KARI N-terminal Rossmann domain. NADP(+) contacts are provided by residues 25 to 28 (YGSQ), Arg48, Ser52, and 82 to 85 (DELQ). His107 is a catalytic residue. Gly133 serves as a coordination point for NADP(+). One can recognise a KARI C-terminal knotted domain in the interval 182–327 (TFREETETDL…KEVRAMMPQF (146 aa)). The Mg(2+) site is built by Asp190, Glu194, Glu226, and Glu230. Residue Ser251 participates in substrate binding.

The protein belongs to the ketol-acid reductoisomerase family. Requires Mg(2+) as cofactor.

The catalysed reaction is (2R)-2,3-dihydroxy-3-methylbutanoate + NADP(+) = (2S)-2-acetolactate + NADPH + H(+). The enzyme catalyses (2R,3R)-2,3-dihydroxy-3-methylpentanoate + NADP(+) = (S)-2-ethyl-2-hydroxy-3-oxobutanoate + NADPH + H(+). It participates in amino-acid biosynthesis; L-isoleucine biosynthesis; L-isoleucine from 2-oxobutanoate: step 2/4. The protein operates within amino-acid biosynthesis; L-valine biosynthesis; L-valine from pyruvate: step 2/4. Its function is as follows. Involved in the biosynthesis of branched-chain amino acids (BCAA). Catalyzes an alkyl-migration followed by a ketol-acid reduction of (S)-2-acetolactate (S2AL) to yield (R)-2,3-dihydroxy-isovalerate. In the isomerase reaction, S2AL is rearranged via a Mg-dependent methyl migration to produce 3-hydroxy-3-methyl-2-ketobutyrate (HMKB). In the reductase reaction, this 2-ketoacid undergoes a metal-dependent reduction by NADPH to yield (R)-2,3-dihydroxy-isovalerate. This is Ketol-acid reductoisomerase (NADP(+)) from Methanoregula boonei (strain DSM 21154 / JCM 14090 / 6A8).